We begin with the raw amino-acid sequence, 181 residues long: LEM domain-containing protein 1 (181 aa).

One can recognise an LEM domain in the interval 1-45 (MVDVKCLSDCKLQNQLEKLGFSPGPILPSTRKLYEKKLVQLLVSP). The chain crosses the membrane as a helical; Signal-anchor for type II membrane protein span at residues 152-172 (FPVGLKLAVLGIFIIVVFVYL).

In terms of tissue distribution, testis-specific. Isoform 6 is detected in 17 of 18 colon cancer tissues examined.

It is found in the membrane. The protein is LEM domain-containing protein 1 (LEMD1) of Homo sapiens (Human).